The primary structure comprises 137 residues: Small ribosomal subunit protein uS9 (137 aa).

The span at 106–117 (KTEGYLTRDPRA) shows a compositional bias: basic and acidic residues. A disordered region spans residues 106–137 (KTEGYLTRDPRAKERRKYGLRKARKAPQYSKR). The segment covering 118-137 (KERRKYGLRKARKAPQYSKR) has biased composition (basic residues).

Belongs to the universal ribosomal protein uS9 family.

The polypeptide is Small ribosomal subunit protein uS9 (Thermosynechococcus vestitus (strain NIES-2133 / IAM M-273 / BP-1)).